The following is a 256-amino-acid chain: Ubiquinone/menaquinone biosynthesis C-methyltransferase UbiE (256 aa).

Over residues 1 to 12 the composition is skewed to basic and acidic residues; the sequence is MNDQRKGDHAEP. Residues 1-23 are disordered; sequence MNDQRKGDHAEPTTHFGYQDVPE. Residues Thr-79, Asp-100, and 128–129 contribute to the S-adenosyl-L-methionine site; that span reads DA.

This sequence belongs to the class I-like SAM-binding methyltransferase superfamily. MenG/UbiE family.

It carries out the reaction a 2-demethylmenaquinol + S-adenosyl-L-methionine = a menaquinol + S-adenosyl-L-homocysteine + H(+). The enzyme catalyses a 2-methoxy-6-(all-trans-polyprenyl)benzene-1,4-diol + S-adenosyl-L-methionine = a 5-methoxy-2-methyl-3-(all-trans-polyprenyl)benzene-1,4-diol + S-adenosyl-L-homocysteine + H(+). Its pathway is quinol/quinone metabolism; menaquinone biosynthesis; menaquinol from 1,4-dihydroxy-2-naphthoate: step 2/2. It functions in the pathway cofactor biosynthesis; ubiquinone biosynthesis. Its function is as follows. Methyltransferase required for the conversion of demethylmenaquinol (DMKH2) to menaquinol (MKH2) and the conversion of 2-polyprenyl-6-methoxy-1,4-benzoquinol (DDMQH2) to 2-polyprenyl-3-methyl-6-methoxy-1,4-benzoquinol (DMQH2). In Pseudomonas putida (strain GB-1), this protein is Ubiquinone/menaquinone biosynthesis C-methyltransferase UbiE.